Here is a 251-residue protein sequence, read N- to C-terminus: 3-deoxy-manno-octulosonate cytidylyltransferase (251 aa).

The protein belongs to the KdsB family.

It is found in the cytoplasm. It carries out the reaction 3-deoxy-alpha-D-manno-oct-2-ulosonate + CTP = CMP-3-deoxy-beta-D-manno-octulosonate + diphosphate. It participates in nucleotide-sugar biosynthesis; CMP-3-deoxy-D-manno-octulosonate biosynthesis; CMP-3-deoxy-D-manno-octulosonate from 3-deoxy-D-manno-octulosonate and CTP: step 1/1. Its pathway is bacterial outer membrane biogenesis; lipopolysaccharide biosynthesis. Activates KDO (a required 8-carbon sugar) for incorporation into bacterial lipopolysaccharide in Gram-negative bacteria. The protein is 3-deoxy-manno-octulosonate cytidylyltransferase of Brucella canis (strain ATCC 23365 / NCTC 10854 / RM-666).